The primary structure comprises 420 residues: MDKFRVQGPTCLSGEVTISGAKNAALPILFAAILAEEPVELTNVPKLKDIDTTIKLLNRLGTKVERNGSVFVDARHINEFCAPYELVKTMRASIWALGPLVARFGRGQVSLPGGCAIGARPVDLHITGLEQLGAEITLDEGYVKARVDGRLKGAHIVMDKVSVGATITIMTAAVLAEGKTIIENAAREPEIEDTANFLNTLGAKISGAGTDSITIEGVERLGGGTYQILPDRIETGTFLVAAAVSRGRVVCRNAKPDTLDAVLAKLREAGADIETGEDWISLDMHGKRPKAVTLRTAPHPGFPTDMQAQFSLLNLVADGAGMITETIFENRFMHIPELIRMGAHAEIESNTVLCHGVDKLSGAQVMATDLRASASLVLAGCIAEGTTIVDRIYHIDRGYENIEAKLQGLGAKIERLHSND.

Position 22-23 (Lys22–Asn23) interacts with phosphoenolpyruvate. Arg91 serves as a coordination point for UDP-N-acetyl-alpha-D-glucosamine. The Proton donor role is filled by Cys115. A 2-(S-cysteinyl)pyruvic acid O-phosphothioketal modification is found at Cys115. Residues Arg120–Leu124, Lys160–Val163, Asp305, and Ile327 each bind UDP-N-acetyl-alpha-D-glucosamine.

Belongs to the EPSP synthase family. MurA subfamily.

It is found in the cytoplasm. It catalyses the reaction phosphoenolpyruvate + UDP-N-acetyl-alpha-D-glucosamine = UDP-N-acetyl-3-O-(1-carboxyvinyl)-alpha-D-glucosamine + phosphate. It participates in cell wall biogenesis; peptidoglycan biosynthesis. Functionally, cell wall formation. Adds enolpyruvyl to UDP-N-acetylglucosamine. The protein is UDP-N-acetylglucosamine 1-carboxyvinyltransferase of Proteus mirabilis (strain HI4320).